The chain runs to 357 residues: Glycerol-3-phosphate dehydrogenase [NAD(P)+] (357 aa).

4 residues coordinate NADPH: Ser30, Phe31, Arg51, and Lys124. The sn-glycerol 3-phosphate site is built by Lys124 and Gly152. Ala156 provides a ligand contact to NADPH. Sn-glycerol 3-phosphate contacts are provided by Lys207, Asp260, Ser270, Arg271, and Asn272. The active-site Proton acceptor is the Lys207. An NADPH-binding site is contributed by Arg271. Position 297 (Glu297) interacts with NADPH.

Belongs to the NAD-dependent glycerol-3-phosphate dehydrogenase family.

It is found in the cytoplasm. It carries out the reaction sn-glycerol 3-phosphate + NAD(+) = dihydroxyacetone phosphate + NADH + H(+). It catalyses the reaction sn-glycerol 3-phosphate + NADP(+) = dihydroxyacetone phosphate + NADPH + H(+). Its pathway is membrane lipid metabolism; glycerophospholipid metabolism. Functionally, catalyzes the reduction of the glycolytic intermediate dihydroxyacetone phosphate (DHAP) to sn-glycerol 3-phosphate (G3P), the key precursor for phospholipid synthesis. This Acinetobacter baumannii (strain AB307-0294) protein is Glycerol-3-phosphate dehydrogenase [NAD(P)+].